The primary structure comprises 314 residues: uncharacterized protein (314 aa).

The next 10 membrane-spanning stretches (helical) occupy residues 4 to 23 (FFIG…YFSG), 36 to 53 (FNKL…FVSI), 68 to 90 (TLVS…YKFF), 97 to 116 (AAVC…GFAV), 131 to 153 (VAII…LNPS), 174 to 196 (PVVW…PAAW), 200 to 222 (FNLI…LAAH), 229 to 251 (EIAY…VGMA), 261 to 283 (MMVL…RFNV), and 290 to 309 (ASLA…WIYV).

It belongs to the auxin efflux carrier (TC 2.A.69) family.

The protein resides in the cell membrane. This is an uncharacterized protein from Escherichia coli O157:H7.